The sequence spans 857 residues: MKNAREIQFSSFLLLAHFCFVGAQSDYAPYFYDNGPNSNNGNMALLNLSEDTPRGTQIYVLNGTDPEGQPVKYGITFEPGSKEFFRVHPKSGVVTLIEDLDREAQDEIEVFVSISDSLNKVVEKVSVFIMDANDERPQFQNMPSIVDVPENTTSGSSIYKVQAVDRDTGSGGSVTYFLQSSEQSPKFAIDHHSGVLRIKPGESLDYEKSRTHFITVVAKDGGGIYKGKQQVMSSSATLTINVIDTQDSPPIFIGTPYFGYVYEVSSPGSEIFTVSAKDGDMDNPNTIIYSLDSGADGSFSINKTSGVITLNLYPADLRREVFNIKVKALEISPEGKRLDFATTTVTIRVVDLNNHPPTFYGENGPQNVFELTMYEHPQEGEFLRGLKITVNDSDQGSNAKFNLRLVGPGRMLRVVPQTVLNEAQVTVLVEDSAAMDFEKSQFLTFKLLAVEIDTPERFSATADIIIHLLDTNDNAPKFTSDFYIARIPENSPGGSNVVSVTAMDPDSGIWGVVKYSIYGSGADIFLIQADSGIIYTQPWASLDAEVKSKYNFYVKAEDPEGKYSLAEVFVTITDLNDHPPAFNENSLEQTMVIGAPVKIEAIDEDAEEPNNLIEYSIMKADPDNIFDINADTGEIKLKPYIKSMDIVQNITNQRDCTWSVVVQAKDRGSPSFSTTTVVKIDITEATPLKGPLTSFFMNSRENPMHFLGLISGVILILVFVTVIISTVIFVRRNKANRILPSRRIIRKKRKPQKQDDFQEPFREEQEIPRADNVNFNNNIKVCSHRTPPSPPNAPVMPPPLPSHCRHGEREWTVPTVSASVASKSKKKSHRCKDNPVNTALVSELKLKLEQKNMANRY.

The first 25 residues, 1–25, serve as a signal peptide directing secretion; that stretch reads MKNAREIQFSSFLLLAHFCFVGAQS. The Extracellular segment spans residues 26–709; the sequence is DYAPYFYDNG…RENPMHFLGL (684 aa). Cadherin domains follow at residues 40–139, 140–252, 253–359, 365–478, 479–582, and 574–693; these read NGNM…RPQF, QNMP…PPIF, IGTP…PPTF, PQNV…APKF, TSDF…PPAF, and DLND…GPLT. Residues 710–730 traverse the membrane as a helical segment; that stretch reads ISGVILILVFVTVIISTVIFV. Residues 731 to 857 are Cytoplasmic-facing; that stretch reads RRNKANRILP…LEQKNMANRY (127 aa). A disordered region spans residues 746 to 765; it reads RKKRKPQKQDDFQEPFREEQ. A compositionally biased stretch (basic and acidic residues) spans 752 to 765; that stretch reads QKQDDFQEPFREEQ.

Expressed in photoreceptor cells of the outer nuclear layer of the retina and in the pinal gland.

The protein localises to the membrane. Its function is as follows. Potential calcium-dependent cell-adhesion protein. Plays a role in the organization of retinal cell layers and Muller glia morphology. This is Cadherin-related family member 1a from Danio rerio (Zebrafish).